Reading from the N-terminus, the 185-residue chain is Ribosome-recycling factor (185 aa).

It belongs to the RRF family.

It is found in the cytoplasm. Functionally, responsible for the release of ribosomes from messenger RNA at the termination of protein biosynthesis. May increase the efficiency of translation by recycling ribosomes from one round of translation to another. The protein is Ribosome-recycling factor of Bacillus anthracis (strain CDC 684 / NRRL 3495).